Reading from the N-terminus, the 1484-residue chain is MQRSPLEKASVLSKLFFSWTRPILTKGYRQRLELSDIYQIPSADSADNLSEKLEREWDRELASKKNPKLINALRRCFFWRFMFYGIILYLGEVTKSVQPLLLGRIIASYDPDNKEERSIAIYLGIGLCLLFVMRTLLLHPAIFGLHRIGMQMRIAMFSLIYKKTLKLSSRVLDKISIGQLVSLLSNNLNKFDEGLALAHFVWIAPLQVTLLMGLLWDLLQASAFCGLAFLIVLALFQAGLGRMMMKYRDQRAGKINERLVITSEMIENIQSVKAYCWEEAMEKMIESIRQTELKLTRKAAYVRYFNSSAFFFSGFFVVFLSVLPYALIKTIVLRKIFTTISFCIVLRMAVTRQFPWAVQTWYDSLGAINKIQDFLQKQEYKTLEYNLTTTEVVMENVTAFWEEGFGELLEKAKQNSNDRKISNADNSLFFSNFSLLGAPVLKDISFKIERGQLLAVAGSTGAGKTSLLMMIMGELEPSEGKIKHSGRISFCSQFSWIMPGTIKENIIFGVSYDEYRYRSVIKACQLEEDISKFAEKDNIVLGEGGITLSGGQRARISLARAVYKDADLYLLDSPFGYLDVLTEKEIFESCVCKLMANKTRILVTSKMEHLKKADKILILHEGSCYFYGTFSELQNLRPDFSSKLMGYDSFDQFSAERRNSIITETLRRFSLEGDAPVSWNETKKQSFKQTGEFGEKRKNSILNPVNSIRKFSVVQKTPLQMNGIEEDSDEPLERRLSLVPDGAEQGEAILPRSNMINTGPTLQRQRRQSVLNLMTCSPGNQGQSFHGRTASSTRKMSLAPQANLTEMDIYSRRLSQDSGLEISEEINEEDLKECFIDDVESIPPVTTWNTYLRYVTIHKSLVFVLIWCLVIFLAEVAISLVVLWLLKKTASQDKGNSTQSINSSYTVIFTSTSTYYVFYIYVGVADTLLALGFFRGLPLVHTLITVSKILHHKMLHAVLQAPMSTLNALKAGGILNRFSKDIAILDDLLPLTIFDFVQLLLIVIGAVTVVSALQPYIFLATVPVIAAFIMLRAYFLHTSQQLKQLESEGRSPIFTHLVTSLKGLWTLRAFGRQPYFETLFHKALNLHTANWFLYLSTLRWFQMRMEIIFVIFFIAITFISILTTGEGVGAVGIILTLAMNIMGTLQWAVNSSIDVDSLMRSVSRVFKFIDMPAEESKPPTKSFKPSKDVQLSKVLITENHHVREDDIWPSGGQMTVKDLTAKYIDGGNAILENISFSISPGQRVGLLGRTGSGKSTLLSAFLRLLNTEGEIQIDGVSWDSITLQEWRKAFGVIPQKVFIFSGTFRKNLDPYGQWNDQEIWKVADEVGLRSVIEQFPGKLDFVLVDGGCVLSHGHKQLMCLARSVLSKAKILLLDEPSAHLDPITYQIIRRTLKQAFADCTVILSEHRIEAMLECQRFLVIEENKVRQYDSLQRLLSEKSLFRQAISPSDRLRFFPHRNSSKHKSRSQIAALKEETEEEVQETRL.

The Cytoplasmic portion of the chain corresponds to 1-77; sequence MQRSPLEKAS…KLINALRRCF (77 aa). The helical transmembrane segment at 78 to 98 threads the bilayer; that stretch reads FWRFMFYGIILYLGEVTKSVQ. An ABC transmembrane type-1 1 domain is found at 81–365; sequence FMFYGIILYL…WAVQTWYDSL (285 aa). Residues 99-122 lie on the Extracellular side of the membrane; it reads PLLLGRIIASYDPDNKEERSIAIY. The helical transmembrane segment at 123–146 threads the bilayer; sequence LGIGLCLLFVMRTLLLHPAIFGLH. Residues 147-195 lie on the Cytoplasmic side of the membrane; sequence RIGMQMRIAMFSLIYKKTLKLSSRVLDKISIGQLVSLLSNNLNKFDEGL. A helical transmembrane segment spans residues 196–216; the sequence is ALAHFVWIAPLQVTLLMGLLW. Residues 217–222 are Extracellular-facing; it reads DLLQAS. Residues 223-243 form a helical membrane-spanning segment; that stretch reads AFCGLAFLIVLALFQAGLGRM. The Cytoplasmic segment spans residues 244 to 298; the sequence is MMKYRDQRAGKINERLVITSEMIENIQSVKAYCWEEAMEKMIESIRQTELKLTRK. The chain crosses the membrane as a helical span at residues 299–319; the sequence is AAYVRYFNSSAFFFSGFFVVF. Residues 320–339 are Extracellular-facing; sequence LSVLPYALIKTIVLRKIFTT. A helical transmembrane segment spans residues 340–358; the sequence is ISFCIVLRMAVTRQFPWAV. The Cytoplasmic portion of the chain corresponds to 359–860; sequence QTWYDSLGAI…YLRYVTIHKS (502 aa). Residues Trp401, Ser434, 458–465, and Gln493 contribute to the ATP site; that span reads GSTGAGKT. The 224-residue stretch at 423 to 646 folds into the ABC transporter 1 domain; that stretch reads NADNSLFFSN…RPDFSSKLMG (224 aa). A lipid anchor (S-palmitoyl cysteine) is attached at Cys524. A phosphoserine mark is found at Ser549 and Ser660. The interval 654–833 is disordered R region; the sequence is SAERRNSIIT…EEINEEDLKE (180 aa). The residue at position 670 (Ser670) is a Phosphoserine; by PKA. Ser686 bears the Phosphoserine mark. Residue Lys688 forms a Glycyl lysine isopeptide (Lys-Gly) (interchain with G-Cter in ubiquitin) linkage. A phosphoserine mark is found at Ser700 and Ser712. Phosphothreonine is present on Thr717. Phosphoserine is present on residues Ser737, Ser769, Ser792, Ser797, and Ser815. The helical transmembrane segment at 861-881 threads the bilayer; the sequence is LVFVLIWCLVIFLAEVAISLV. In terms of domain architecture, ABC transmembrane type-1 2 spans 861 to 1157; sequence LVFVLIWCLV…AVNSSIDVDS (297 aa). At 882 to 920 the chain is on the extracellular side; the sequence is VLWLLKKTASQDKGNSTQSINSSYTVIFTSTSTYYVFYI. Residues Asn896 and Asn902 are each glycosylated (N-linked (GlcNAc...) asparagine). Residues 921–941 traverse the membrane as a discontinuously helical segment; that stretch reads YVGVADTLLALGFFRGLPLVH. Topologically, residues 942–992 are cytoplasmic; the sequence is TLITVSKILHHKMLHAVLQAPMSTLNALKAGGILNRFSKDIAILDDLLPLT. A helical transmembrane segment spans residues 993 to 1013; it reads IFDFVQLLLIVIGAVTVVSAL. The Extracellular segment spans residues 1014 to 1015; the sequence is QP. Residues 1016-1036 form a helical membrane-spanning segment; it reads YIFLATVPVIAAFIMLRAYFL. The Cytoplasmic portion of the chain corresponds to 1037-1097; the sequence is HTSQQLKQLE…TANWFLYLST (61 aa). A helical membrane pass occupies residues 1098–1118; the sequence is LRWFQMRMEIIFVIFFIAITF. At 1119-1132 the chain is on the extracellular side; that stretch reads ISILTTGEGVGAVG. Residues 1133-1153 form a helical membrane-spanning segment; the sequence is IILTLAMNIMGTLQWAVNSSI. Topologically, residues 1154-1484 are cytoplasmic; that stretch reads DVDSLMRSVS…TEEEVQETRL (331 aa). Positions 1214–1447 constitute an ABC transporter 2 domain; it reads MTVKDLTAKY…KSLFRQAISP (234 aa). Residues Tyr1223 and 1248-1255 each bind ATP; that span reads GRTGSGKS. The interaction with GORASP2 stretch occupies residues 1390 to 1484; that stretch reads RTLKQAFADC…TEEEVQETRL (95 aa). Cys1399 is lipidated: S-palmitoyl cysteine. Phosphoserine is present on residues Ser1448 and Ser1460. Basic residues predominate over residues 1456–1465; it reads HRNSSKHKSR. The disordered stretch occupies residues 1456-1484; sequence HRNSSKHKSRSQIAALKEETEEEVQETRL. Positions 1474-1484 are enriched in acidic residues; the sequence is ETEEEVQETRL. The PDZ-binding signature appears at 1482 to 1484; that stretch reads TRL.

The protein belongs to the ABC transporter superfamily. ABCC family. CFTR transporter (TC 3.A.1.202) subfamily. Monomer; does not require oligomerization for channel activity. May form oligomers in the membrane. Interacts with SLC26A3, SLC26A6 and NHERF1. Interacts with SHANK2. Interacts with MYO6. Interacts (via C-terminus) with GOPC (via PDZ domain); this promotes CFTR internalization and thereby decreases channel activity. Interacts with SLC4A7 through NHERF1. Found in a complex with MYO5B and RAB11A. Interacts with ANO1. Interacts with SLC26A8. Interacts with AHCYL1; the interaction increases CFTR activity. Interacts with CSE1L. The core-glycosylated form interacts with GORASP2 (via PDZ GRASP-type 1 domain) in respone to ER stress. Interacts with MARCHF2; the interaction leads to CFTR ubiqtuitination and degradation. Interacts with ADGRG2. In terms of processing, N-glycosylated. Phosphorylated; cAMP treatment promotes phosphorylation and activates the channel. Dephosphorylation decreases the ATPase activity (in vitro). Phosphorylation at PKA sites activates the channel. Phosphorylation at PKC sites enhances the response to phosphorylation by PKA. Phosphorylated by AMPK; this inhibits channel activity. Post-translationally, ubiquitinated, leading to its degradation in the lysosome. Deubiquitination by USP10 in early endosomes enhances its endocytic recycling to the cell membrane. Ubiquitinated by RNF185 during ER stress. Ubiquitinated by MARCHF2.

Its subcellular location is the apical cell membrane. The protein resides in the early endosome membrane. The protein localises to the cell membrane. It localises to the recycling endosome membrane. It is found in the endoplasmic reticulum membrane. Its subcellular location is the nucleus. The catalysed reaction is ATP + H2O + closed Cl(-) channel = ADP + phosphate + open Cl(-) channel.. The enzyme catalyses chloride(in) = chloride(out). It catalyses the reaction hydrogencarbonate(in) = hydrogencarbonate(out). It carries out the reaction ATP + H2O = ADP + phosphate + H(+). Its function is as follows. Epithelial ion channel that plays an important role in the regulation of epithelial ion and water transport and fluid homeostasis. Mediates the transport of chloride ions across the cell membrane. Possesses an intrinsic ATPase activity and utilizes ATP to gate its channel; the passive flow of anions through the channel is gated by cycles of ATP binding and hydrolysis by the ATP-binding domains. The ion channel is also permeable to HCO(3)(-); selectivity depends on the extracellular chloride concentration. Exerts its function also by modulating the activity of other ion channels and transporters. Contributes to the regulation of the pH and the ion content of the epithelial fluid layer. Modulates the activity of the epithelial sodium channel (ENaC) complex, in part by regulating the cell surface expression of the ENaC complex. May regulate bicarbonate secretion and salvage in epithelial cells by regulating the transporter SLC4A7. Can inhibit the chloride channel activity of ANO1. Plays a role in the chloride and bicarbonate homeostasis during sperm epididymal maturation and capacitation. This chain is Cystic fibrosis transmembrane conductance regulator, found in Mustela putorius furo (European domestic ferret).